The sequence spans 415 residues: DNA primase DnaG (415 aa).

The Toprim domain maps to 171-250 (DAIIIVEGRA…AFSPRGKSVE (80 aa)). Residues Glu177, Asp219, and Asp221 each contribute to the Mg(2+) site. The interval 280-323 (ELPGDLGGRPARTAPAHDEGGNSDTTGKQAVSQKRIRDGTSKVP) is disordered. Over residues 301 to 311 (NSDTTGKQAVS) the composition is skewed to polar residues.

Belongs to the archaeal DnaG primase family. As to quaternary structure, forms a ternary complex with MCM helicase and DNA. Mg(2+) is required as a cofactor.

The enzyme catalyses ssDNA + n NTP = ssDNA/pppN(pN)n-1 hybrid + (n-1) diphosphate.. Functionally, RNA polymerase that catalyzes the synthesis of short RNA molecules used as primers for DNA polymerase during DNA replication. This chain is DNA primase DnaG, found in Methanoregula boonei (strain DSM 21154 / JCM 14090 / 6A8).